The following is a 143-amino-acid chain: Transcriptional regulator MraZ (143 aa).

SpoVT-AbrB domains are found at residues 5–47 (EYEH…PRSV) and 76–119 (AADM…APRR).

It belongs to the MraZ family. In terms of assembly, forms oligomers.

Its subcellular location is the cytoplasm. It is found in the nucleoid. This is Transcriptional regulator MraZ from Roseiflexus sp. (strain RS-1).